Consider the following 471-residue polypeptide: Eremophilane O-acetyltransferase prx11 (471 aa).

Belongs to the fumigaclavine B O-acetyltransferase family. As to quaternary structure, monomer.

It participates in sesquiterpene biosynthesis. O-acetyltransferase; part of the gene cluster that mediates the biosynthesis of PR-toxin, a bicyclic sesquiterpene belonging to the eremophilane class and acting as a mycotoxin. The first step of the pathway is catalyzed by the aristolochene synthase which performs the cyclization of trans,trans-farnesyl diphosphate (FPP) to the bicyclic sesquiterpene aristolochene. Following the formation of aristolochene, the non-oxygenated aristolochene is converted to the trioxygenated intermediate eremofortin B, via 7-epi-neopetasone. This conversion appears to involve three enzymes, a hydroxysterol oxidase-like enzyme, the quinone-oxidase prx3 that forms the quinone-type-structure in the bicyclic nucleus of aristolochene with the C8-oxo group and the C-3 hydroxyl group, and the P450 monooxygenase prx9 that introduces the epoxide at the double bond between carbons 1 and 2. No monoxy or dioxy-intermediates have been reported to be released to the broth, so these three early oxidative reactions may be coupled together. Eremofortin B is further oxidized by another P450 monooxygenase, that introduces a second epoxide between carbons 7 and 11 prior to acetylation to eremofortin A by the acetyltransferase prx11. The second epoxidation may be performed by a second P450 monooxygenase. After the acetylation step, eremofortin A is converted to eremofortin C and then to PR-toxin. First the conversion of eremofortin A to eremofortin C proceeds by oxidation of the side chain of the molecule at C-12 and is catalyzed by the short-chain oxidoreductase prx1. The cytochrome P450 monooxygenase prx8 also plays a role in this step. The primary alcohol formed at C-12 is finally oxidized by the short-chain alcohol dehydrogenase prx4 that forms PR-toxin. The sequence is that of Eremophilane O-acetyltransferase prx11 from Penicillium rubens (strain ATCC 28089 / DSM 1075 / NRRL 1951 / Wisconsin 54-1255) (Penicillium chrysogenum).